We begin with the raw amino-acid sequence, 378 residues long: MAMNLENIVNQATAQYVKIKEHREPYTAHYNALKDKVYSEWKSSAVLGKLLKGSTLCGGYGDKLKVSIPDEFDLLIHLVFPENDKIIVKADASKPGNVILDMTKVMEIIGSQEHNKPVFDRLQKIVNNKKQLLEDKLNSFLESIMTQTLNKMGNQIEVAGRISHLQYKKCGPAHTIFVKGSCKYSVDFVPAIRLSAAQVVLAPEQRIHFGETLYWDAIPKPMKPAKTDNTSFTSSFYEAERRLLYGKQFLKPAIRLMKQNRNVKNKANLKSYHIKTLFLWQVIQQDPSYWSNSPKDIFIEMLGKLADSLALTPKKGKLPFFWDPKLDMFAQLTDSQRTDLYNHFRKCEYTFRKDNGNVNDCTENNVHSSFSKNTTYKL.

3 residues coordinate Mg(2+): Glu-71, Asp-73, and Asp-187. ATP is bound at residue 71 to 73 (EFD). Residues Asp-187 and 233-240 (TSSFYEAE) contribute to the GTP site. ATP-binding positions include 237 to 240 (YEAE), Lys-258, and 271 to 275 (SYHIK).

This sequence belongs to the mab-21 family. Requires Mg(2+) as cofactor. It depends on Mn(2+) as a cofactor.

It catalyses the reaction GTP + ATP = 3',2'-cGAMP + 2 diphosphate. It carries out the reaction GTP + ATP = pppA(2'-5')pG + diphosphate. The catalysed reaction is pppA(2'-5')pG = 3',2'-cGAMP + diphosphate. The enzyme activity is specifically activated by double-stranded RNA (dsRNA). Recognizes long dsRNA (&gt;30 bp) with no preference for 5' RNA phosphorylation. Functionally, nucleotidyltransferase that catalyzes the formation of cyclic GMP-AMP (3',2'-cGAMP) from ATP and GTP and plays a key role in antiviral innate immunity. Synthesizes 3',2'-cGAMP in a two-step reaction through production of the linear intermediate pppA(2'-5')pG. Acts as a key sensor of double-stranded RNA (dsRNA), the presence of dsRNA in the cytoplasm being a danger signal that triggers the immune responses. Directly binds dsRNA, activating the nucleotidyltransferase activity, leading to synthesis of 3',2'-cGAMP, a second messenger that binds to and activates Sting, thereby triggering the antiviral immune response via activation of the NF-kappa-B transcription factor Rel (Relish). 3',2'-cGAMP is protected from poxin cleavage. This chain is Cyclic GMP-AMP synthase-like receptor 1, found in Drosophila melanogaster (Fruit fly).